The primary structure comprises 254 residues: Alcohol dehydrogenase (254 aa).

10 to 33 (FVAGLGGIGLDTSREIVKSGPKNL) provides a ligand contact to NAD(+). Ser138 contacts substrate. Tyr151 functions as the Proton acceptor in the catalytic mechanism.

It belongs to the short-chain dehydrogenases/reductases (SDR) family. Homodimer.

It carries out the reaction a primary alcohol + NAD(+) = an aldehyde + NADH + H(+). The catalysed reaction is a secondary alcohol + NAD(+) = a ketone + NADH + H(+). This is Alcohol dehydrogenase (Adh) from Drosophila planitibia (Fruit fly).